The following is a 210-amino-acid chain: Glutathione S-transferase P 2 (210 aa).

The GST N-terminal domain maps to 2–81; it reads PPYTIVYFPS…HLGRSLGLYG (80 aa). Residues tyrosine 8, arginine 14, tryptophan 39, lysine 45, 52 to 53, and 65 to 66 contribute to the glutathione site; these read QL and QS. The GST C-terminal domain maps to 83-204; that stretch reads NQREAAQVDM…SSPEHVNRPI (122 aa).

Belongs to the GST superfamily. Pi family. As to quaternary structure, homodimer. In terms of tissue distribution, selectively expressed in gall bladder, colon, heart, and skeletal muscle.

It catalyses the reaction RX + glutathione = an S-substituted glutathione + a halide anion + H(+). Conjugation of reduced glutathione to a wide number of exogenous and endogenous hydrophobic electrophiles. Cannot metabolize 1-chloro-2,4-dinitrobenzene. This chain is Glutathione S-transferase P 2 (Gstp2), found in Mus musculus (Mouse).